The sequence spans 761 residues: Phosphoribosylformylglycinamidine synthase subunit PurL (761 aa).

H49 is an active-site residue. Residues Y52 and K92 each contribute to the ATP site. E94 provides a ligand contact to Mg(2+). Residues S95–H98 and R117 each bind substrate. The Proton acceptor role is filled by H96. Mg(2+) is bound at residue D118. Substrate is bound at residue Q241. D269 serves as a coordination point for Mg(2+). E318–Q320 provides a ligand contact to substrate. Residues N502 and G539 each coordinate ATP. Mg(2+) is bound at residue N540. S542 is a binding site for substrate.

The protein belongs to the FGAMS family. In terms of assembly, monomer. Part of the FGAM synthase complex composed of 1 PurL, 1 PurQ and 2 PurS subunits.

Its subcellular location is the cytoplasm. It catalyses the reaction N(2)-formyl-N(1)-(5-phospho-beta-D-ribosyl)glycinamide + L-glutamine + ATP + H2O = 2-formamido-N(1)-(5-O-phospho-beta-D-ribosyl)acetamidine + L-glutamate + ADP + phosphate + H(+). It functions in the pathway purine metabolism; IMP biosynthesis via de novo pathway; 5-amino-1-(5-phospho-D-ribosyl)imidazole from N(2)-formyl-N(1)-(5-phospho-D-ribosyl)glycinamide: step 1/2. Part of the phosphoribosylformylglycinamidine synthase complex involved in the purines biosynthetic pathway. Catalyzes the ATP-dependent conversion of formylglycinamide ribonucleotide (FGAR) and glutamine to yield formylglycinamidine ribonucleotide (FGAM) and glutamate. The FGAM synthase complex is composed of three subunits. PurQ produces an ammonia molecule by converting glutamine to glutamate. PurL transfers the ammonia molecule to FGAR to form FGAM in an ATP-dependent manner. PurS interacts with PurQ and PurL and is thought to assist in the transfer of the ammonia molecule from PurQ to PurL. The chain is Phosphoribosylformylglycinamidine synthase subunit PurL from Chlorobium chlorochromatii (strain CaD3).